Reading from the N-terminus, the 365-residue chain is Terpene cyclase DEP1 (365 aa).

Helical transmembrane passes span 10-30 (LYLS…NGMF), 82-102 (LLFF…LIES), 116-136 (AWAM…IYLY), 158-178 (LPII…PAWF), 188-208 (ALIA…VGIT), 233-253 (LILA…GALF), 297-317 (LFSQ…AQLL), and 338-358 (MIYL…SFAL).

The protein belongs to the membrane-bound ascI terpene cyclase family.

It is found in the membrane. It participates in polyketide biosynthesis. Functionally, part of the gene cluster that mediates the biosynthesis of depudecin, a highly oxidized eleven-carbon linear polyketide that acts as a histone deacetylase (HDAC) inhibitor and makes a small contribution to pathogenesis. The reducing polyketide synthase DEP5 is the central enzyme in depudecin biosynthesis by yielding the backbone polyketide chain. The monooxygenases DEP2 and DEP4, as well as the uncharacterized protein DEP1, then act as tailoring enzymes to modify the intermediate polyketide chain into depudecin. This Fusarium langsethiae protein is Terpene cyclase DEP1.